The sequence spans 156 residues: ATP synthase subunit b (156 aa).

The helical transmembrane segment at 7–29 (LFAQMVVFLVLAWFTMKFVWPPL) threads the bilayer.

Belongs to the ATPase B chain family. As to quaternary structure, F-type ATPases have 2 components, F(1) - the catalytic core - and F(0) - the membrane proton channel. F(1) has five subunits: alpha(3), beta(3), gamma(1), delta(1), epsilon(1). F(0) has three main subunits: a(1), b(2) and c(10-14). The alpha and beta chains form an alternating ring which encloses part of the gamma chain. F(1) is attached to F(0) by a central stalk formed by the gamma and epsilon chains, while a peripheral stalk is formed by the delta and b chains.

It is found in the cell inner membrane. Functionally, f(1)F(0) ATP synthase produces ATP from ADP in the presence of a proton or sodium gradient. F-type ATPases consist of two structural domains, F(1) containing the extramembraneous catalytic core and F(0) containing the membrane proton channel, linked together by a central stalk and a peripheral stalk. During catalysis, ATP synthesis in the catalytic domain of F(1) is coupled via a rotary mechanism of the central stalk subunits to proton translocation. In terms of biological role, component of the F(0) channel, it forms part of the peripheral stalk, linking F(1) to F(0). This Burkholderia ambifaria (strain MC40-6) protein is ATP synthase subunit b.